The primary structure comprises 341 residues: Coiled-coil domain-containing protein 86 (341 aa).

The tract at residues 1 to 341 (MGTPLRRSRR…QPPQRPVAKV (341 aa)) is disordered. Position 18 is a phosphoserine (S18). Residues 26-49 (EVSRAKRALVDFKSNPEETRELES) show a composition bias toward basic and acidic residues. S59 bears the Phosphoserine mark. Low complexity predominate over residues 64–73 (PETSPESPCP). T66 carries the phosphothreonine modification. Phosphoserine occurs at positions 67, 70, 81, 92, 103, 114, and 124. Polar residues predominate over residues 105-114 (AGQTESNPES). A compositionally biased stretch (basic and acidic residues) spans 130–139 (EVAHAKEEVI). Phosphoserine is present on residues S142, S169, S170, and S200. Residues 219 to 235 (GKPKSGRVWKDRSKKRF) show a composition bias toward basic residues. The span at 254 to 298 (ERQERKLAKDFARHLEEEKQRRRQEKKERRAENLRRRLENERKAE) shows a compositional bias: basic and acidic residues. Residues 261-304 (AKDFARHLEEEKQRRRQEKKERRAENLRRRLENERKAEIVQVIR) are a coiled coil. Basic residues predominate over residues 307–317 (AKLKKAKKKQL). A Citrulline modification is found at R323.

In terms of processing, citrullinated by PADI4.

It is found in the nucleus. Its subcellular location is the chromosome. It localises to the nucleolus. In terms of biological role, required for proper chromosome segregation during mitosis and error-free mitotic progression. The polypeptide is Coiled-coil domain-containing protein 86 (Rattus norvegicus (Rat)).